Here is a 607-residue protein sequence, read N- to C-terminus: Arginine--tRNA ligase, cytoplasmic (607 aa).

A2 carries the N-acetylalanine modification. S15 bears the Phosphoserine mark. Interaction with tRNA regions lie at residues 59–60 and 106–111; these read EW and NGPFIQ. L-arginine-binding positions include 148 to 153, H162, Y347, D351, and Q375; that span reads EFSSPN. The short motif at 151-162 is the 'HIGH' region element; it reads SPNIAKPFHAGH. The interaction with tRNA stretch occupies residues 484-498; that stretch reads DTGPYLQYAHSRLRS.

Belongs to the class-I aminoacyl-tRNA synthetase family. In terms of assembly, monomer.

It is found in the cytoplasm. The protein resides in the cytosol. It carries out the reaction tRNA(Arg) + L-arginine + ATP = L-arginyl-tRNA(Arg) + AMP + diphosphate. In terms of biological role, forms part of a macromolecular complex that catalyzes the attachment of specific amino acids to cognate tRNAs during protein synthesis. The polypeptide is Arginine--tRNA ligase, cytoplasmic (Saccharomyces cerevisiae (strain ATCC 204508 / S288c) (Baker's yeast)).